A 72-amino-acid polypeptide reads, in one-letter code: Translation initiation factor IF-1 (72 aa).

One can recognise an S1-like domain in the interval methionine 1 to lysine 72.

It belongs to the IF-1 family. As to quaternary structure, component of the 30S ribosomal translation pre-initiation complex which assembles on the 30S ribosome in the order IF-2 and IF-3, IF-1 and N-formylmethionyl-tRNA(fMet); mRNA recruitment can occur at any time during PIC assembly.

Its subcellular location is the cytoplasm. Functionally, one of the essential components for the initiation of protein synthesis. Stabilizes the binding of IF-2 and IF-3 on the 30S subunit to which N-formylmethionyl-tRNA(fMet) subsequently binds. Helps modulate mRNA selection, yielding the 30S pre-initiation complex (PIC). Upon addition of the 50S ribosomal subunit IF-1, IF-2 and IF-3 are released leaving the mature 70S translation initiation complex. This Caldanaerobacter subterraneus subsp. tengcongensis (strain DSM 15242 / JCM 11007 / NBRC 100824 / MB4) (Thermoanaerobacter tengcongensis) protein is Translation initiation factor IF-1.